Consider the following 406-residue polypeptide: Nodal homolog (406 aa).

The signal sequence occupies residues 1–18 (MAFLTAVLYLGFACISQG). A propeptide spanning residues 19 to 281 (LPTWPDRVES…RVPGIRRHRR (263 aa)) is cleaved from the precursor. Asn71, Asn136, and Asn172 each carry an N-linked (GlcNAc...) asparagine glycan. The disordered stretch occupies residues 195–222 (KERAERGSGMSNAEFIDAPGPSQQYNPH). 3 cysteine pairs are disulfide-bonded: Cys306–Cys372, Cys335–Cys403, and Cys339–Cys405. A glycan (N-linked (GlcNAc...) asparagine) is linked at Asn344.

This sequence belongs to the TGF-beta family. In terms of assembly, homodimer; disulfide-linked. Interacts with, and is inhibited by cer1 and gdf10/bmp3b. In terms of tissue distribution, in the first phase of expression, localized to the vegetal region of the blastula. During gastrulation (stage 10.5), this expression disappears and instead becomes localized to the dorsal marginal zone, with enrichment in the organizer. During the second phase of expression in neurulae and tailbud embryos, expression restarts firstly in two symmetric patches near the posterior end of the notochord, and then in a large asymmetrical domain in the left lateral plate mesoderm.

The protein resides in the secreted. In terms of biological role, cooperation and regulatory loops of multiple nodals are essential for mesendoderm patterning in early embryos. Essential for mesoderm formation and axial patterning during embryonic development. Activates the activin-like signaling pathway to induce dorsal and ventral mesoderm in animal cap ectoderm. In addition, also dorsalizes ventral marginal zone (VMZ) tissues during gastrulation. Acts in a downstream signaling cascade via cripto and cer1 to mediate cardiogenesis in embryonic mesoderm. Directs the orientation of the left-right axis by driving the left-specific gene cascade in the left lateral plate mesoderm. The chain is Nodal homolog from Xenopus laevis (African clawed frog).